The chain runs to 674 residues: CRS2-associated factor 1, chloroplastic (674 aa).

Residues 1-54 (MATARLPSRSFLSPAQQSYPRLPASVRLCLSHHEQPPTGPKRHRRAATSHPAFS) constitute a chloroplast transit peptide. The segment at 31–61 (SHHEQPPTGPKRHRRAATSHPAFSAAARGRA) is disordered. Positions 48-57 (TSHPAFSAAA) are enriched in low complexity. CRM domains lie at 183–279 (EPLT…TRPC) and 301–397 (GGLT…LPPL). The tract at residues 554-576 (GLLCLLEQAIHSGRALVLSEDEL) is CRS2 binding.

In terms of assembly, interacts with CRS2 and RNA. Part of large ribonucleo-protein complexes that include group IIB introns, CRS2 and CAF1.

It is found in the plastid. It localises to the chloroplast stroma. Required for the splicing of group IIB introns in chloroplasts. Forms splicing particles with CRS2. Interacts with RNA and confers intron specificity of the splicing particles. The polypeptide is CRS2-associated factor 1, chloroplastic (CAF1) (Zea mays (Maize)).